The sequence spans 206 residues: MSAVRSKICGITRIEDALAAAEAGADAIGLVFYPKSPRAVTVLQARAIIAALPPFITTVGLFVNASRCELNETLDAVALDMLQFHGDETPDECDGYHRPYIKALRVKAGDDIAQVCRTYRNARGVLLDTYVEGVPGGTGETFDWALIPDDLDKPVILAGGLTSANVAQAIAQVRPYAVDVSGGVEKSKGIKDREKILAFMSAVHGT.

It belongs to the TrpF family.

It catalyses the reaction N-(5-phospho-beta-D-ribosyl)anthranilate = 1-(2-carboxyphenylamino)-1-deoxy-D-ribulose 5-phosphate. It functions in the pathway amino-acid biosynthesis; L-tryptophan biosynthesis; L-tryptophan from chorismate: step 3/5. The chain is N-(5'-phosphoribosyl)anthranilate isomerase from Pseudomonas savastanoi pv. phaseolicola (strain 1448A / Race 6) (Pseudomonas syringae pv. phaseolicola (strain 1448A / Race 6)).